The sequence spans 447 residues: Phosphoglucosamine mutase (447 aa).

Ser108 functions as the Phosphoserine intermediate in the catalytic mechanism. The Mg(2+) site is built by Ser108, Asp247, Asp249, and Asp251. The residue at position 108 (Ser108) is a Phosphoserine.

Belongs to the phosphohexose mutase family. The cofactor is Mg(2+). Post-translationally, activated by phosphorylation.

It carries out the reaction alpha-D-glucosamine 1-phosphate = D-glucosamine 6-phosphate. Functionally, catalyzes the conversion of glucosamine-6-phosphate to glucosamine-1-phosphate. The chain is Phosphoglucosamine mutase from Bordetella petrii (strain ATCC BAA-461 / DSM 12804 / CCUG 43448).